Here is a 683-residue protein sequence, read N- to C-terminus: Leishmanolysin-like peptidase (683 aa).

Position 257 (His-257) interacts with Zn(2+). The active site involves Glu-258. The Zn(2+) site is built by His-261 and His-364.

It belongs to the peptidase M8 family. Zn(2+) serves as cofactor.

Its subcellular location is the cytoplasm. Its function is as follows. Essential for the coordination of mitotic progression, and also plays a role in cell migration. In Drosophila melanogaster (Fruit fly), this protein is Leishmanolysin-like peptidase (Invadolysin).